Reading from the N-terminus, the 339-residue chain is tRNA N6-adenosine threonylcarbamoyltransferase (339 aa).

Residues His-117 and His-121 each coordinate Fe cation. Residues Val-140–Gly-144, Asp-173, Gly-186, and Asn-279 each bind substrate. Residue Asp-307 coordinates Fe cation.

Belongs to the KAE1 / TsaD family. Fe(2+) is required as a cofactor.

It is found in the cytoplasm. The catalysed reaction is L-threonylcarbamoyladenylate + adenosine(37) in tRNA = N(6)-L-threonylcarbamoyladenosine(37) in tRNA + AMP + H(+). Required for the formation of a threonylcarbamoyl group on adenosine at position 37 (t(6)A37) in tRNAs that read codons beginning with adenine. Is involved in the transfer of the threonylcarbamoyl moiety of threonylcarbamoyl-AMP (TC-AMP) to the N6 group of A37, together with TsaE and TsaB. TsaD likely plays a direct catalytic role in this reaction. This is tRNA N6-adenosine threonylcarbamoyltransferase from Syntrophomonas wolfei subsp. wolfei (strain DSM 2245B / Goettingen).